The chain runs to 898 residues: Phosphoenolpyruvate carboxylase (898 aa).

Catalysis depends on residues H138 and K561.

Belongs to the PEPCase type 1 family. It depends on Mg(2+) as a cofactor.

It catalyses the reaction oxaloacetate + phosphate = phosphoenolpyruvate + hydrogencarbonate. Forms oxaloacetate, a four-carbon dicarboxylic acid source for the tricarboxylic acid cycle. The protein is Phosphoenolpyruvate carboxylase of Streptococcus pneumoniae serotype 2 (strain D39 / NCTC 7466).